The sequence spans 334 residues: ATP-dependent kinase YFH7 (334 aa).

30–38 contributes to the ATP binding site; that stretch reads GHPGSGKST.

The protein belongs to the YFH7 family.

Its function is as follows. ATP-dependent kinase that could be involved in endoplasmic reticulum membrane assembly. The polypeptide is ATP-dependent kinase YFH7 (YFH7) (Eremothecium gossypii (strain ATCC 10895 / CBS 109.51 / FGSC 9923 / NRRL Y-1056) (Yeast)).